The primary structure comprises 1156 residues: Condensin-2 complex subunit G2 (1156 aa).

One copy of the HEAT repeat lies at Met460–Cys498. The disordered stretch occupies residues Pro587–Lys611. Residues Glu589–Gly601 are compositionally biased toward acidic residues.

As to quaternary structure, component of the condensin-2 complex, which contains the smc2 and smc4 heterodimer, and three non SMC subunits that probably regulate the complex: ncaph2, ncapd3 and ncapg2.

It localises to the nucleus. Regulatory subunit of the condensin-2 complex, a complex which establishes mitotic chromosome architecture and is involved in physical rigidity of the chromatid axis. This is Condensin-2 complex subunit G2 (ncapg2) from Xenopus laevis (African clawed frog).